Here is a 403-residue protein sequence, read N- to C-terminus: Na(+)/H(+) antiporter NhaH (403 aa).

Residues M1–D6 are Cytoplasmic-facing. A helical membrane pass occupies residues V7–L27. Residues L28–E30 lie on the Extracellular side of the membrane. The helical transmembrane segment at P31 to I51 threads the bilayer. Over E52–Q65 the chain is Cytoplasmic. A helical membrane pass occupies residues A66–F86. Topologically, residues H87–G98 are extracellular. A helical membrane pass occupies residues L99–L119. The Cytoplasmic portion of the chain corresponds to D120–A124. Residues V125–F145 form a helical membrane-spanning segment. The Extracellular segment spans residues K146–G167. A helical membrane pass occupies residues I168–W188. Topologically, residues A189 to V195 are cytoplasmic. The chain crosses the membrane as a helical span at residues F196–F216. The Extracellular segment spans residues S217–Q218. A helical transmembrane segment spans residues V219 to G239. The Cytoplasmic segment spans residues S240 to Y241. A helical transmembrane segment spans residues F242–F262. Residues G263–T281 lie on the Extracellular side of the membrane. A helical membrane pass occupies residues F282–I302. Residues R303–N310 are Cytoplasmic-facing. A helical transmembrane segment spans residues W311–L331. The Extracellular portion of the chain corresponds to G332–D372. The chain crosses the membrane as a helical span at residues Q373–L393. Residues K394–I403 lie on the Cytoplasmic side of the membrane.

It belongs to the monovalent cation:proton antiporter 1 (CPA1) transporter (TC 2.A.36) family.

It localises to the cell membrane. Functionally, na(+)/H(+) antiporter that extrudes sodium in exchange for external protons. Can also transport lithium. The protein is Na(+)/H(+) antiporter NhaH (nhaH) of Halobacillus dabanensis.